A 169-amino-acid chain; its full sequence is Large ribosomal subunit protein uL10 (169 aa).

This sequence belongs to the universal ribosomal protein uL10 family. As to quaternary structure, part of the ribosomal stalk of the 50S ribosomal subunit. The N-terminus interacts with L11 and the large rRNA to form the base of the stalk. The C-terminus forms an elongated spine to which L12 dimers bind in a sequential fashion forming a multimeric L10(L12)X complex.

Its function is as follows. Forms part of the ribosomal stalk, playing a central role in the interaction of the ribosome with GTP-bound translation factors. This Rickettsia rickettsii (strain Iowa) protein is Large ribosomal subunit protein uL10.